Reading from the N-terminus, the 859-residue chain is Chitin synthase 1 (859 aa).

Positions 1–22 (MRRWFKKTLPRPPDEEESAGLT) are disordered. The next 5 membrane-spanning stretches (helical) occupy residues 544–564 (LATIVFGWFNIGNFFIIFYIL), 615–635 (MVIMYSILMGYLLFCSGWIAY), 662–682 (FINIVISLSSTYGMYLVVSII), 793–813 (YVVLTWILSNLFLVGIVLSIP), and 833–853 (LWSVVAFSVFRFIGCIFYLFI).

It belongs to the chitin synthase family.

Its subcellular location is the cell membrane. The catalysed reaction is [(1-&gt;4)-N-acetyl-beta-D-glucosaminyl](n) + UDP-N-acetyl-alpha-D-glucosamine = [(1-&gt;4)-N-acetyl-beta-D-glucosaminyl](n+1) + UDP + H(+). Functionally, polymerizes chitin, a structural polymer of the cell wall and septum, by transferring the sugar moiety of UDP-GlcNAc to the non-reducing end of the growing chitin polymer. The polypeptide is Chitin synthase 1 (chs1) (Schizosaccharomyces pombe (strain 972 / ATCC 24843) (Fission yeast)).